Consider the following 200-residue polypeptide: Probable GTP-binding protein EngB (200 aa).

One can recognise an EngB-type G domain in the interval Ser-25 to Trp-199. GTP is bound by residues Gly-33–Ser-40, Gly-60–Leu-64, Asp-78–Gly-81, Thr-145–Asp-148, and Phe-178–Ser-180. Mg(2+)-binding residues include Ser-40 and Thr-62.

This sequence belongs to the TRAFAC class TrmE-Era-EngA-EngB-Septin-like GTPase superfamily. EngB GTPase family. Mg(2+) serves as cofactor.

Its function is as follows. Necessary for normal cell division and for the maintenance of normal septation. The protein is Probable GTP-binding protein EngB of Legionella pneumophila (strain Paris).